The primary structure comprises 61 residues: MSEKMLQVTQVRSVIGGTKKQKATIKALGLGRPNHKVQIKDNPCSRGQIRVVQHLVKVEEL.

This sequence belongs to the universal ribosomal protein uL30 family. Part of the 50S ribosomal subunit.

This is Large ribosomal subunit protein uL30 from Chlorobaculum parvum (strain DSM 263 / NCIMB 8327) (Chlorobium vibrioforme subsp. thiosulfatophilum).